The primary structure comprises 263 residues: MAQDMTYARYLALDELLSAQKPLSDRHDELLFIVIHQTKELWLKEILHEVALALKLIAGGDVEPAYKALARVSRIQTVMTLSWDILATMTPADYLSFRDDLGTSSGFQSHQFRALEYLLGLKDQSFLKFHTERPEALAMLKSALESPSLYDVAIAQLPRHGLTVPDAALHRDFSQTYVPSPEVEAAWLEVYRDPKRYWELYQLAEKLVDLDDALVTWRHKHVLTVERIIGGRPGTGGTDGVGYLASTLRRRAFPELWSLRTKL.

Substrate contacts are provided by residues 32–36 (FIVIH), Tyr94, and Arg98. His221 is a binding site for heme. A substrate-binding site is contributed by Thr235.

Belongs to the tryptophan 2,3-dioxygenase family. Homotetramer. The cofactor is heme.

It carries out the reaction L-tryptophan + O2 = N-formyl-L-kynurenine. The protein operates within amino-acid degradation; L-tryptophan degradation via kynurenine pathway; L-kynurenine from L-tryptophan: step 1/2. Heme-dependent dioxygenase that catalyzes the oxidative cleavage of the L-tryptophan (L-Trp) pyrrole ring and converts L-tryptophan to N-formyl-L-kynurenine. Catalyzes the oxidative cleavage of the indole moiety. The polypeptide is Tryptophan 2,3-dioxygenase (Caulobacter vibrioides (strain ATCC 19089 / CIP 103742 / CB 15) (Caulobacter crescentus)).